Here is a 325-residue protein sequence, read N- to C-terminus: GTP 3',8-cyclase (325 aa).

Residues 4-219 (NYNRNINYLR…HGLQQKFGLL (216 aa)) enclose the Radical SAM core domain. A GTP-binding site is contributed by Arg13. Cys20 and Cys24 together coordinate [4Fe-4S] cluster. Tyr26 is an S-adenosyl-L-methionine binding site. Cys27 serves as a coordination point for [4Fe-4S] cluster. Arg63 is a binding site for GTP. Gly67 is a binding site for S-adenosyl-L-methionine. GTP is bound at residue Thr94. Ser118 lines the S-adenosyl-L-methionine pocket. A GTP-binding site is contributed by Lys155. Met189 serves as a coordination point for S-adenosyl-L-methionine. Residues Cys254 and Cys257 each contribute to the [4Fe-4S] cluster site. 259-261 (RLR) serves as a coordination point for GTP. Cys271 is a binding site for [4Fe-4S] cluster.

Belongs to the radical SAM superfamily. MoaA family. In terms of assembly, monomer and homodimer. Requires [4Fe-4S] cluster as cofactor.

The catalysed reaction is GTP + AH2 + S-adenosyl-L-methionine = (8S)-3',8-cyclo-7,8-dihydroguanosine 5'-triphosphate + 5'-deoxyadenosine + L-methionine + A + H(+). It participates in cofactor biosynthesis; molybdopterin biosynthesis. Functionally, catalyzes the cyclization of GTP to (8S)-3',8-cyclo-7,8-dihydroguanosine 5'-triphosphate. The protein is GTP 3',8-cyclase of Desulforamulus reducens (strain ATCC BAA-1160 / DSM 100696 / MI-1) (Desulfotomaculum reducens).